Here is a 507-residue protein sequence, read N- to C-terminus: MEELQGYLEIDRSRQQHFLYPLLFQEYIYALAHDHGLNGSIFYEPMENLGYDNKSSSLIVKRLITRMHQQNHLIISVNDSNENGFVGHNKSFYSQMVSEGFAVIMEIPFSLRLVSSLEEKEIAKSHNLRSIHSIFPFFEDKLSHLNHVSDILIPHPIHLEILVQTLHCWIQDAPSLHLLRFFLHEYRNSNSLITPKKSISLFSKENQRFFLFLYNSHVYECESVLVFLRKQSSHLRSTSSGTFLERTHFYGKIEHLVVVLRNDFQKTLWLFKDPFMHYVRYQGKYILASKGTHLLMKKWKSHLVNFWQCHFYLWSRPDRIHINQLYNHSFYFLGYLSSVRLNTSAVRIQMLENSFLIDTSINKFETLVPIISLIGSVAKAKFCNVSGHPISKSVRADSSDSDIINRFGRIYRNLSHYHSGSSKKQTLYRIKYILRLSCARTLARKHKSTVRAFLKRLGSEFLEEFLTEEEQVLSLIFQRNSFPSYRSHRERIWYLDIIRINDLANHS.

This sequence belongs to the intron maturase 2 family. MatK subfamily.

It is found in the plastid. The protein resides in the chloroplast. Usually encoded in the trnK tRNA gene intron. Probably assists in splicing its own and other chloroplast group II introns. This chain is Maturase K, found in Liriodendron tulipifera (Tuliptree).